Here is a 498-residue protein sequence, read N- to C-terminus: MEAPRPAGTFVVVGGGIAGVTCAEQLAVSFPEEDILLVTASPVIKAVTNFRQVSKVLEEFDVEEQPGTMLESRFPNIKVIESGVKQLKSEDHCIFTEDGREFVYKKLCLCAGAKPKLIYEGNPRVLGIRDTDSAQEFQKELAKARRIMIVGNGGIALELAYEIEGCEVVWAIKDNAIGNTFFDAGAAEFLTSKLMSEKSEAKIAHKRTIYTVEEAKKETRTKSKADYVGSALGPDWHGGLALKGTEEFSHSVHIETRCEVKKIYLEEEFKIMKKKSLAFPKDHHKSVTADKEMWPVYVELTNGTIYGCDFLVSATGVTPNVHPFLHRNNFALGEDGGLRVDDQMRTSLPDIYAAGDICTACWQPSPVWQQMRLWTQARQMGYYAAKCMAAASMGHPIDMDFSFELFAHVTKFFNYKVVLLGKYNAQGLGADHELMLRCTRGQEYVKVVMQNGRMMGAVLIGETDLEETFENLILNQMDLSSYGEDLLDPNIDIEDYFD.

The residue at position 1 (M1) is an N-acetylmethionine.

It belongs to the class-I pyridine nucleotide-disulfide oxidoreductase family. PYROXD1 subfamily. Requires FAD as cofactor.

The protein resides in the nucleus. It localises to the cytoplasm. It is found in the myofibril. The protein localises to the sarcomere. Functionally, probable FAD-dependent oxidoreductase; involved in the cellular oxidative stress response. Required for normal sarcomere structure and muscle fiber integrity. The polypeptide is Pyridine nucleotide-disulfide oxidoreductase domain-containing protein 1 (Pyroxd1) (Mus musculus (Mouse)).